Consider the following 340-residue polypeptide: uncharacterized protein (340 aa).

The RING-CH-type zinc finger occupies 6–70 (KYEKSSARCW…PQCLTAYRIA (65 aa)). 8 residues coordinate Zn(2+): C14, C17, C37, C39, H44, C47, C60, and C63. Helical transmembrane passes span 249-269 (EFWI…TKIL), 274-294 (PILL…GNFT), and 300-320 (IIGA…FIAW).

The protein resides in the membrane. This is an uncharacterized protein from Schizosaccharomyces pombe (strain 972 / ATCC 24843) (Fission yeast).